Here is a 109-residue protein sequence, read N- to C-terminus: Cell division protein ZapA (109 aa).

A coiled-coil region spans residues 21–97 (PDQRDALNQA…QTIEQALLDQ (77 aa)).

The protein belongs to the ZapA family. Type 1 subfamily. As to quaternary structure, homodimer. Interacts with FtsZ.

It is found in the cytoplasm. Its function is as follows. Activator of cell division through the inhibition of FtsZ GTPase activity, therefore promoting FtsZ assembly into bundles of protofilaments necessary for the formation of the division Z ring. It is recruited early at mid-cell but it is not essential for cell division. The chain is Cell division protein ZapA from Salmonella agona (strain SL483).